The chain runs to 343 residues: Fructose-1,6-bisphosphatase, cytosolic (343 aa).

5 residues coordinate Mg(2+): E71, E100, D121, L123, and D124. Residues 124-127 (DGSS), N215, Y247, Y267, and K277 contribute to the substrate site. Position 283 (E283) interacts with Mg(2+).

It belongs to the FBPase class 1 family. Mg(2+) is required as a cofactor.

The protein resides in the cytoplasm. It carries out the reaction beta-D-fructose 1,6-bisphosphate + H2O = beta-D-fructose 6-phosphate + phosphate. This chain is Fructose-1,6-bisphosphatase, cytosolic (CFBP), found in Saccharum hybrid (Sugarcane).